The sequence spans 358 residues: Membrane-bound lytic murein transglycosylase C (358 aa).

The N-terminal stretch at Met1–Ser16 is a signal peptide. The N-palmitoyl cysteine moiety is linked to residue Cys17. Cys17 carries S-diacylglycerol cysteine lipidation.

Belongs to the transglycosylase Slt family.

It localises to the cell outer membrane. It carries out the reaction Exolytic cleavage of the (1-&gt;4)-beta-glycosidic linkage between N-acetylmuramic acid (MurNAc) and N-acetylglucosamine (GlcNAc) residues in peptidoglycan, from either the reducing or the non-reducing ends of the peptidoglycan chains, with concomitant formation of a 1,6-anhydrobond in the MurNAc residue.. Murein-degrading enzyme. May play a role in recycling of muropeptides during cell elongation and/or cell division. This chain is Membrane-bound lytic murein transglycosylase C, found in Yersinia pseudotuberculosis serotype O:1b (strain IP 31758).